The chain runs to 635 residues: PTS system mannitol-specific EIICBA component (635 aa).

The PTS EIIC type-2 domain occupies 12–342 (FGRFLSNMVM…LFKTSKVKER (331 aa)). 6 helical membrane-spanning segments follow: residues 24-45 (IGAF…WLPN), 50-70 (KLVG…TGGK), 134-155 (SAGI…PAVE), 165-185 (VNFM…EPAK), 273-292 (VILG…GGLV), and 313-334 (FANI…AVLF). A PTS EIIB type-2 domain is found at 378–473 (RKIIVACDAG…RLVAAQRHID (96 aa)). Cysteine 384 serves as the catalytic Phosphocysteine intermediate; for EIIB activity. At cysteine 384 the chain carries Phosphocysteine; by EIIA. The PTS EIIA type-2 domain occupies 494–635 (FQLGADNIFL…VDEVLALLNK (142 aa)). Histidine 554 serves as the catalytic Tele-phosphohistidine intermediate; for EIIA activity. The residue at position 554 (histidine 554) is a Phosphohistidine; by HPr.

As to quaternary structure, homodimer. An intramolecular phosphotransfer takes places between His-554 and Cys-384.

The protein localises to the cell inner membrane. The enzyme catalyses D-mannitol(out) + N(pros)-phospho-L-histidyl-[protein] = D-mannitol 1-phosphate(in) + L-histidyl-[protein]. In terms of biological role, the phosphoenolpyruvate-dependent sugar phosphotransferase system (sugar PTS), a major carbohydrate active transport system, catalyzes the phosphorylation of incoming sugar substrates concomitantly with their translocation across the cell membrane. This system is involved in D-mannitol transport. The sequence is that of PTS system mannitol-specific EIICBA component from Klebsiella pneumoniae.